We begin with the raw amino-acid sequence, 541 residues long: Membrane protein insertase YidC (541 aa).

6 helical membrane passes run 6–26, 326–346, 349–369, 420–440, 457–477, and 500–520; these read NLLL…WESD, VVDY…LMFF, LVHN…GLLY, GGCL…WVLL, LSVQ…MWAM, and MIFT…WLVG.

The protein belongs to the OXA1/ALB3/YidC family. Type 1 subfamily. In terms of assembly, interacts with the Sec translocase complex via SecD. Specifically interacts with transmembrane segments of nascent integral membrane proteins during membrane integration.

The protein localises to the cell inner membrane. Functionally, required for the insertion and/or proper folding and/or complex formation of integral membrane proteins into the membrane. Involved in integration of membrane proteins that insert both dependently and independently of the Sec translocase complex, as well as at least some lipoproteins. Aids folding of multispanning membrane proteins. This Shewanella amazonensis (strain ATCC BAA-1098 / SB2B) protein is Membrane protein insertase YidC.